Reading from the N-terminus, the 223-residue chain is Capsid protein (223 aa).

Basic and acidic residues predominate over residues 1 to 19 (MDDETKKLKNKNKETKEGD). The tract at residues 1 to 21 (MDDETKKLKNKNKETKEGDDV) is disordered.

It belongs to the closteroviridae capsid protein family. Consists of at least two size variants, CP1 and CP2, which result of post-translational proteolysis at sites approximately 12 to 15 and 26 AA from the N-terminus respectively.

The protein resides in the virion. This Citrus tristeza virus (isolate T36) (CTV) protein is Capsid protein.